A 416-amino-acid polypeptide reads, in one-letter code: Serine hydroxymethyltransferase (416 aa).

(6S)-5,6,7,8-tetrahydrofolate contacts are provided by residues L121 and 125–127; that span reads GHL. K229 is subject to N6-(pyridoxal phosphate)lysine. (6S)-5,6,7,8-tetrahydrofolate contacts are provided by residues E245 and 354–356; that span reads SPF.

It belongs to the SHMT family. In terms of assembly, homodimer. Pyridoxal 5'-phosphate serves as cofactor.

Its subcellular location is the cytoplasm. The catalysed reaction is (6R)-5,10-methylene-5,6,7,8-tetrahydrofolate + glycine + H2O = (6S)-5,6,7,8-tetrahydrofolate + L-serine. It functions in the pathway one-carbon metabolism; tetrahydrofolate interconversion. Its pathway is amino-acid biosynthesis; glycine biosynthesis; glycine from L-serine: step 1/1. Functionally, catalyzes the reversible interconversion of serine and glycine with tetrahydrofolate (THF) serving as the one-carbon carrier. This reaction serves as the major source of one-carbon groups required for the biosynthesis of purines, thymidylate, methionine, and other important biomolecules. Also exhibits THF-independent aldolase activity toward beta-hydroxyamino acids, producing glycine and aldehydes, via a retro-aldol mechanism. This chain is Serine hydroxymethyltransferase, found in Aliivibrio fischeri (strain ATCC 700601 / ES114) (Vibrio fischeri).